A 343-amino-acid chain; its full sequence is MGTADERRFEVLRAIVADFVATHEPIGSKSLVERHNLGVSSATIRNDMAVLEAEGYIAQPHTSSGRVPTEKGYREFVDRLDDVKPLSMVERRAIQGFLESGVDLDDVLRRAVRLLAQLTRQVAVVQYPTLSTSKVRHLEVIALTPARLLMVVITDSGRVDQRIVELGDVIDDHQLSQLRELLGQALEGKKLAAASVAVADLAGQLSGAGGLGDAVGRSATVLLESLVEHTEERLLMGGTANLTRNAADFGGSLRSILEALEEQVVVLRLLAAQQEAGKVTVRIGHETEAEQIVGTSMVSTAYGSNDTVYGGMGVLGPTRMDYPGTIASVAAVALYIGEVLGAR.

It belongs to the HrcA family.

Negative regulator of class I heat shock genes (grpE-dnaK-dnaJ and groELS operons). Prevents heat-shock induction of these operons. The sequence is that of Heat-inducible transcription repressor HrcA from Mycobacterium marinum (strain ATCC BAA-535 / M).